Here is a 267-residue protein sequence, read N- to C-terminus: 4-hydroxy-tetrahydrodipicolinate reductase (267 aa).

NAD(+)-binding positions include 12 to 17 (GPRGRM), 100 to 102 (GTT), and 126 to 129 (APNF). The active-site Proton donor/acceptor is the His156. A (S)-2,3,4,5-tetrahydrodipicolinate-binding site is contributed by His157. The active-site Proton donor is Lys160. 166–167 (GT) is a binding site for (S)-2,3,4,5-tetrahydrodipicolinate.

This sequence belongs to the DapB family.

The protein resides in the cytoplasm. It carries out the reaction (S)-2,3,4,5-tetrahydrodipicolinate + NAD(+) + H2O = (2S,4S)-4-hydroxy-2,3,4,5-tetrahydrodipicolinate + NADH + H(+). The catalysed reaction is (S)-2,3,4,5-tetrahydrodipicolinate + NADP(+) + H2O = (2S,4S)-4-hydroxy-2,3,4,5-tetrahydrodipicolinate + NADPH + H(+). The protein operates within amino-acid biosynthesis; L-lysine biosynthesis via DAP pathway; (S)-tetrahydrodipicolinate from L-aspartate: step 4/4. Catalyzes the conversion of 4-hydroxy-tetrahydrodipicolinate (HTPA) to tetrahydrodipicolinate. The sequence is that of 4-hydroxy-tetrahydrodipicolinate reductase from Bacillus licheniformis (strain ATCC 14580 / DSM 13 / JCM 2505 / CCUG 7422 / NBRC 12200 / NCIMB 9375 / NCTC 10341 / NRRL NRS-1264 / Gibson 46).